The sequence spans 724 residues: Polyribonucleotide nucleotidyltransferase (724 aa).

Residues aspartate 488 and aspartate 494 each coordinate Mg(2+). Residues 555–614 (PRMITVKINPEKIRDVIGKGGSTIQALTKETGCTIDIGEDGTITIASTSSEGMAEAKRRI) enclose the KH domain. One can recognise an S1 motif domain in the interval 624-692 (GKIYNGTVLK…EKGRMRLSIK (69 aa)). Residues 697 to 724 (EEGDVPVAAPQAPGAGDAASQQQQQQQQ) form a disordered region. Residues 701–724 (VPVAAPQAPGAGDAASQQQQQQQQ) are compositionally biased toward low complexity.

It belongs to the polyribonucleotide nucleotidyltransferase family. Mg(2+) serves as cofactor.

It localises to the cytoplasm. It catalyses the reaction RNA(n+1) + phosphate = RNA(n) + a ribonucleoside 5'-diphosphate. Its function is as follows. Involved in mRNA degradation. Catalyzes the phosphorolysis of single-stranded polyribonucleotides processively in the 3'- to 5'-direction. This chain is Polyribonucleotide nucleotidyltransferase, found in Ralstonia pickettii (strain 12J).